The primary structure comprises 396 residues: Elongation factor Tu (396 aa).

The region spanning 11–205 is the tr-type G domain; that stretch reads KPHVNIGTIG…VVDEYIPTPE (195 aa). The segment at 20 to 27 is G1; sequence GHVDHGKT. 20-27 is a binding site for GTP; the sequence is GHVDHGKT. Residue Thr27 participates in Mg(2+) binding. The G2 stretch occupies residues 61–65; that stretch reads GITIN. A G3 region spans residues 82–85; that stretch reads DAPG. Residues 82-86 and 137-140 contribute to the GTP site; these read DAPGH and NKCD. The interval 137–140 is G4; it reads NKCD. The segment at 175–177 is G5; the sequence is SAL.

It belongs to the TRAFAC class translation factor GTPase superfamily. Classic translation factor GTPase family. EF-Tu/EF-1A subfamily. As to quaternary structure, monomer.

It localises to the cytoplasm. It catalyses the reaction GTP + H2O = GDP + phosphate + H(+). Its function is as follows. GTP hydrolase that promotes the GTP-dependent binding of aminoacyl-tRNA to the A-site of ribosomes during protein biosynthesis. This Lactobacillus delbrueckii subsp. bulgaricus (strain ATCC 11842 / DSM 20081 / BCRC 10696 / JCM 1002 / NBRC 13953 / NCIMB 11778 / NCTC 12712 / WDCM 00102 / Lb 14) protein is Elongation factor Tu.